The chain runs to 190 residues: Dual-action ribosomal maturation protein DarP (190 aa).

The disordered stretch occupies residues 1-31; that stretch reads MIHADHDDNLPDDEEGLPLPPSKSQRKRDMH.

This sequence belongs to the DarP family.

The protein resides in the cytoplasm. In terms of biological role, member of a network of 50S ribosomal subunit biogenesis factors which assembles along the 30S-50S interface, preventing incorrect 23S rRNA structures from forming. Promotes peptidyl transferase center (PTC) maturation. The chain is Dual-action ribosomal maturation protein DarP from Aromatoleum aromaticum (strain DSM 19018 / LMG 30748 / EbN1) (Azoarcus sp. (strain EbN1)).